Consider the following 522-residue polypeptide: N-acetylgalactosamine-6-sulfatase (522 aa).

The signal sequence occupies residues 1 to 25 (MAPVAAATGWRLLLVLSAAGLGAAG). Residues 27 to 379 (PQPPNILLLL…PAMLGGQLTD (353 aa)) form a catalytic domain region. Ca(2+) contacts are provided by aspartate 38, aspartate 39, and cysteine 78. Catalysis depends on cysteine 78, which acts as the Nucleophile. 3-oxoalanine (Cys) is present on cysteine 78. Histidine 141 is a catalytic residue. The N-linked (GlcNAc...) asparagine glycan is linked to asparagine 203. Ca(2+) contacts are provided by aspartate 288 and asparagine 289. Cysteine 308 and cysteine 419 are disulfide-bonded. Asparagine 423 is a glycosylation site (N-linked (GlcNAc...) asparagine). 2 cysteine pairs are disulfide-bonded: cysteine 489-cysteine 518 and cysteine 501-cysteine 507.

It belongs to the sulfatase family. As to quaternary structure, homodimer. The cofactor is Ca(2+). In terms of processing, the conversion to 3-oxoalanine (also known as C-formylglycine, FGly), of a serine or cysteine residue in prokaryotes and of a cysteine residue in eukaryotes, is critical for catalytic activity.

It is found in the lysosome. It carries out the reaction Hydrolysis of the 6-sulfate groups of the N-acetyl-D-galactosamine 6-sulfate units of chondroitin sulfate and of the D-galactose 6-sulfate units of keratan sulfate.. In Canis lupus familiaris (Dog), this protein is N-acetylgalactosamine-6-sulfatase (GALNS).